The sequence spans 226 residues: Protein GrpE (226 aa).

2 disordered regions span residues M1–R24 and G205–A226. Polar residues predominate over residues N217–A226.

It belongs to the GrpE family. As to quaternary structure, homodimer.

Its subcellular location is the cytoplasm. In terms of biological role, participates actively in the response to hyperosmotic and heat shock by preventing the aggregation of stress-denatured proteins, in association with DnaK and GrpE. It is the nucleotide exchange factor for DnaK and may function as a thermosensor. Unfolded proteins bind initially to DnaJ; upon interaction with the DnaJ-bound protein, DnaK hydrolyzes its bound ATP, resulting in the formation of a stable complex. GrpE releases ADP from DnaK; ATP binding to DnaK triggers the release of the substrate protein, thus completing the reaction cycle. Several rounds of ATP-dependent interactions between DnaJ, DnaK and GrpE are required for fully efficient folding. This is Protein GrpE from Brucella melitensis biotype 1 (strain ATCC 23456 / CCUG 17765 / NCTC 10094 / 16M).